Here is a 131-residue protein sequence, read N- to C-terminus: Profilin-1 (131 aa).

It belongs to the profilin family. In terms of assembly, occurs in many kinds of cells as a complex with monomeric actin in a 1:1 ratio.

It is found in the cytoplasm. The protein localises to the cytoskeleton. Functionally, binds to actin and affects the structure of the cytoskeleton. At high concentrations, profilin prevents the polymerization of actin, whereas it enhances it at low concentrations. By binding to PIP2, it inhibits the formation of IP3 and DG. In Hordeum vulgare (Barley), this protein is Profilin-1 (PRO1).